The sequence spans 250 residues: MSRLLLNCDIGESFGSWTMGLDAEVMPFIDCANIACGFHAGDPSIMRKTVSLALSHGVKIGAHPAYQDLVGFGRRSMAYTAQELQDILHYQIGALDGICRAQGGKVSYVKPHGAMYNDMMANPAQLRAVIQAVVAYDRSLPLMLMATRDNTAAQQLGDEYGVTLWFEAFADRAYDSAGRLVSRQLPGAVHHDCETIIGQALTIARGDNLTASDGSALHLQANTLCVHGDNASSVAAVQRIRQALNEQSAP.

The protein belongs to the LamB/PxpA family. In terms of assembly, forms a complex composed of PxpA, PxpB and PxpC.

The enzyme catalyses 5-oxo-L-proline + ATP + 2 H2O = L-glutamate + ADP + phosphate + H(+). In terms of biological role, catalyzes the cleavage of 5-oxoproline to form L-glutamate coupled to the hydrolysis of ATP to ADP and inorganic phosphate. In Pseudomonas fluorescens (strain Pf0-1), this protein is 5-oxoprolinase subunit A.